Here is a 48-residue protein sequence, read N- to C-terminus: ATP synthase protein 8 (48 aa).

N-formylmethionine is present on methionine 1. Residues methionine 1–glutamine 12 are Mitochondrial intermembrane-facing. The chain crosses the membrane as a helical span at residues leucine 13–proline 33. The Mitochondrial matrix portion of the chain corresponds to tyrosine 34–leucine 48.

F-type ATP synthases have 2 components, the catalytic core F(1) and the membrane-embedded component F(0), linked together by a central stalk and a peripheral stalk. The central stalk, also called rotor shaft, is often seen as part of F(1). The peripheral stalk is seen as part of F(0). F(0) contains the membrane channel next to the rotor. F-type ATP synthases form dimers but each monomer functions independently in ATP generation. The dimer consists of 18 different polypeptides: ATP1 (subunit alpha, part of F(1), 3 molecules per monomer), ATP2 (subunit beta, part of F(1), 3 molecules per monomer), ATP3 (subunit gamma, part of the central stalk), ATP4 (subunit b, part of the peripheral stalk), ATP5/OSCP (subunit 5/OSCP, part of the peripheral stalk), ATP6 (subunit a, part of the peripheral stalk), ATP7 (subunit d, part of the peripheral stalk), ATP8 (subunit 8, part of the peripheral stalk), OLI1 (subunit c, part of the rotor, 10 molecules per monomer), ATP14 (subunit h, part of the peripheral stalk), ATP15 (subunit epsilon, part of the central stalk), ATP16 (subunit delta, part of the central stalk), ATP17 (subunit f, part of the peripheral stalk), ATP18 (subunit i/j, part of the peripheral stalk). Dimer-specific subunits are ATP19 (subunit k, at interface between monomers), ATP20 (subunit g, at interface between monomers), TIM11 (subunit e, at interface between monomers). Also contains subunit L.

It is found in the mitochondrion inner membrane. In terms of biological role, mitochondrial membrane ATP synthase (F(1)F(0) ATP synthase or Complex V) produces ATP from ADP in the presence of a proton gradient across the membrane which is generated by electron transport complexes of the respiratory chain. F-type ATP synthases consist of two structural domains, F(1) - containing the extramembraneous catalytic core, and F(0) - containing the membrane proton channel, linked together by a central stalk and a peripheral stalk. During catalysis, ATP synthesis in the catalytic domain of F(1) is coupled via a rotary mechanism of the central stalk subunits to proton translocation. Part of the complex F(0) domain. Minor subunit located with subunit a/ATP6 in the membrane. The polypeptide is ATP synthase protein 8 (Pichia angusta (Yeast)).